Here is a 459-residue protein sequence, read N- to C-terminus: Ribulose bisphosphate carboxylase large chain (459 aa).

An N6,N6,N6-trimethyllysine modification is found at Lys-4. Positions 113 and 163 each coordinate substrate. The Proton acceptor role is filled by Lys-165. Residue Lys-167 coordinates substrate. Residues Lys-191, Asp-193, and Glu-194 each coordinate Mg(2+). At Lys-191 the chain carries N6-carboxylysine. His-284 acts as the Proton acceptor in catalysis. Arg-285, His-317, and Ser-369 together coordinate substrate.

This sequence belongs to the RuBisCO large chain family. Type I subfamily. In terms of assembly, heterohexadecamer of 8 large chains and 8 small chains; disulfide-linked. The disulfide link is formed within the large subunit homodimers. Mg(2+) is required as a cofactor. In terms of processing, the disulfide bond which can form in the large chain dimeric partners within the hexadecamer appears to be associated with oxidative stress and protein turnover.

It localises to the plastid. It is found in the chloroplast. It catalyses the reaction 2 (2R)-3-phosphoglycerate + 2 H(+) = D-ribulose 1,5-bisphosphate + CO2 + H2O. It carries out the reaction D-ribulose 1,5-bisphosphate + O2 = 2-phosphoglycolate + (2R)-3-phosphoglycerate + 2 H(+). Functionally, ruBisCO catalyzes two reactions: the carboxylation of D-ribulose 1,5-bisphosphate, the primary event in carbon dioxide fixation, as well as the oxidative fragmentation of the pentose substrate in the photorespiration process. Both reactions occur simultaneously and in competition at the same active site. This Nypa fruticans (Nypa palm) protein is Ribulose bisphosphate carboxylase large chain.